The chain runs to 290 residues: PIH1 domain-containing protein 1 (290 aa).

Residues Ser-12 and Ser-173 each carry the phosphoserine modification.

The protein belongs to the PIH1 family. Component of the R2TP complex composed at least of RUVBL1, RUVBL2, RPAP3 and PIHD1. Component of the PAQosome complex which is responsible for the biogenesis of several protein complexes and which consists of R2TP complex members RUVBL1, RUVBL2, RPAP3 and PIH1D1, URI complex members PFDN2, PFDN6, PDRG1, UXT and URI1 as well as ASDURF, POLR2E and DNAAF10/WDR92. Interacts with phosphorylated TELO2 and mediates interaction of TELO2 with the R2TP complex. Interacts with phosphorylated ECD, EFTUD2/SNRP116, RPB1 and UBR5 and with RPB1 in a phosphorylation-independent manner. Interacts with the core C/D box snoRNP particle components NOP58 and FBL and with RUVBL1/TIP49. Interacts with RPAP3 and DNAAF10. Interacts with histone H4 and with SWI/SNF complex member SMARCB1/SNF5. Interacts with the mTORC1 complex member RPTOR. Interacts with MSL1. In terms of tissue distribution, expressed at low levels in normal mammary epithelial cells (at protein level). Highest expression in lung, leukocyte and placenta. Expressed at lower levels in brain, prostate, colon, heart, small intestine, liver, ovary, pancreas, skeletal muscle, spleen, testis and thymus.

Its subcellular location is the nucleus. Involved in the assembly of C/D box small nucleolar ribonucleoprotein (snoRNP) particles. Recruits the SWI/SNF complex to the core promoter of rRNA genes and enhances pre-rRNA transcription. Mediates interaction of TELO2 with the R2TP complex which is necessary for the stability of MTOR and SMG1. Positively regulates the assembly and activity of the mTORC1 complex. This Homo sapiens (Human) protein is PIH1 domain-containing protein 1 (PIH1D1).